We begin with the raw amino-acid sequence, 465 residues long: Midnolin (465 aa).

The Ubiquitin-like domain maps to 32-106; the sequence is MSLAIHSTTG…LTLVPTVEAG (75 aa). 2 disordered regions span residues 185–262 and 400–445; these read SVAT…SRKP and RLRR…GLDF. Composition is skewed to low complexity over residues 195-219 and 240-257; these read RPVSSAARVPPVSSSPSSPVSPSPV and SPPASSSSTSTPGSSPTP. A required for nucleolar localization region spans residues 397–424; the sequence is QQKRLRRKARRDARGPYHWTPSRKAGRS.

In terms of assembly, interacts with GCK; the interaction occurs preferentially at low glucose levels. Interacts with the proteasome. In terms of tissue distribution, expressed at high levels in brain and liver with significantly lower levels in muscle.

The protein resides in the nucleus. It is found in the cytoplasm. It localises to the cytosol. The protein localises to the nucleolus. Functionally, facilitates the ubiquitin-independent proteasomal degradation of stimulus-induced transcription factors such as FOSB, EGR1, NR4A1, and IRF4 to the proteasome for degradation. Promotes also the degradation of other substrates such as CBX4. Plays a role in inhibiting the activity of glucokinase GCK and both glucose-induced and basal insulin secretion. The polypeptide is Midnolin (Midn) (Mus musculus (Mouse)).